A 144-amino-acid chain; its full sequence is Large ribosomal subunit protein uL15 (144 aa).

A disordered region spans residues 1 to 53 (MRLNTLSPAEGAKHAPKRLGRGIGSGLGKTGGRGHKGQKSRSGGGVRRGFEGG). The span at 21 to 31 (RGIGSGLGKTG) shows a compositional bias: gly residues.

This sequence belongs to the universal ribosomal protein uL15 family. Part of the 50S ribosomal subunit.

Binds to the 23S rRNA. This chain is Large ribosomal subunit protein uL15, found in Pectobacterium carotovorum subsp. carotovorum (strain PC1).